We begin with the raw amino-acid sequence, 256 residues long: 1-(5-phosphoribosyl)-5-[(5-phosphoribosylamino)methylideneamino] imidazole-4-carboxamide isomerase (256 aa).

Residue aspartate 8 is the Proton acceptor of the active site. The Proton donor role is filled by aspartate 130.

Belongs to the HisA/HisF family.

It localises to the cytoplasm. The catalysed reaction is 1-(5-phospho-beta-D-ribosyl)-5-[(5-phospho-beta-D-ribosylamino)methylideneamino]imidazole-4-carboxamide = 5-[(5-phospho-1-deoxy-D-ribulos-1-ylimino)methylamino]-1-(5-phospho-beta-D-ribosyl)imidazole-4-carboxamide. Its pathway is amino-acid biosynthesis; L-histidine biosynthesis; L-histidine from 5-phospho-alpha-D-ribose 1-diphosphate: step 4/9. The sequence is that of 1-(5-phosphoribosyl)-5-[(5-phosphoribosylamino)methylideneamino] imidazole-4-carboxamide isomerase from Chlorobium phaeovibrioides (strain DSM 265 / 1930) (Prosthecochloris vibrioformis (strain DSM 265)).